Consider the following 278-residue polypeptide: Large ribosomal subunit protein uL2 (278 aa).

2 disordered regions span residues 33–53 (LTEGKRKTGGRNNKGHVTSRG) and 221–278 (RGVA…KKKR). Over residues 269–278 (IRSRHAKKKR) the composition is skewed to basic residues.

The protein belongs to the universal ribosomal protein uL2 family. In terms of assembly, part of the 50S ribosomal subunit. Forms a bridge to the 30S subunit in the 70S ribosome.

One of the primary rRNA binding proteins. Required for association of the 30S and 50S subunits to form the 70S ribosome, for tRNA binding and peptide bond formation. It has been suggested to have peptidyltransferase activity; this is somewhat controversial. Makes several contacts with the 16S rRNA in the 70S ribosome. This chain is Large ribosomal subunit protein uL2, found in Novosphingobium aromaticivorans (strain ATCC 700278 / DSM 12444 / CCUG 56034 / CIP 105152 / NBRC 16084 / F199).